Reading from the N-terminus, the 171-residue chain is Der GTPase-activating protein YihI (171 aa).

Disordered regions lie at residues 1 to 99 and 145 to 171; these read MKKP…QAEL and LSYD…RGGN. A compositionally biased stretch (basic and acidic residues) spans 20–30; the sequence is TREELNQEARD. Residues 31–40 are compositionally biased toward basic residues; that stretch reads RKRLKKHRGH. The segment covering 147–160 has biased composition (acidic residues); that stretch reads YDDDDEDDEEDEKQ.

Belongs to the YihI family. As to quaternary structure, interacts with Der.

Functionally, a GTPase-activating protein (GAP) that modifies Der/EngA GTPase function. May play a role in ribosome biogenesis. The sequence is that of Der GTPase-activating protein YihI from Salmonella choleraesuis (strain SC-B67).